We begin with the raw amino-acid sequence, 466 residues long: GTPase Der (466 aa).

2 EngA-type G domains span residues 30 to 193 (PVVA…PEVS) and 203 to 376 (RRVA…ASWD). Residues 36–43 (GRPNVGKS), 83–87 (DTGGW), 145–148 (NKVD), 209–216 (GKPNVGKS), 256–260 (DTAGL), and 321–324 (NKWD) each bind GTP. The region spanning 377–459 (TRIATGPLNS…PIRINVRVRE (83 aa)) is the KH-like domain.

Belongs to the TRAFAC class TrmE-Era-EngA-EngB-Septin-like GTPase superfamily. EngA (Der) GTPase family. As to quaternary structure, associates with the 50S ribosomal subunit.

In terms of biological role, GTPase that plays an essential role in the late steps of ribosome biogenesis. The chain is GTPase Der from Mycolicibacterium paratuberculosis (strain ATCC BAA-968 / K-10) (Mycobacterium paratuberculosis).